A 310-amino-acid chain; its full sequence is Putative HTH-type transcriptional regulatory protein SSO0942 (310 aa).

The HTH cro/C1-type domain maps to leucine 125–valine 180. A DNA-binding region (H-T-H motif) is located at residues isoleucine 136 to lysine 155.

The protein is Putative HTH-type transcriptional regulatory protein SSO0942 of Saccharolobus solfataricus (strain ATCC 35092 / DSM 1617 / JCM 11322 / P2) (Sulfolobus solfataricus).